Here is a 66-residue protein sequence, read N- to C-terminus: UPF0337 protein M6_Spy1542 (66 aa).

Residues 1–10 (MSEEKLKAKV) are compositionally biased toward basic and acidic residues. The segment at 1–22 (MSEEKLKAKVEQASGSLKEGAG) is disordered.

The protein belongs to the UPF0337 (CsbD) family.

This is UPF0337 protein M6_Spy1542 from Streptococcus pyogenes serotype M6 (strain ATCC BAA-946 / MGAS10394).